Reading from the N-terminus, the 314-residue chain is Oxalate oxidoreductase subunit beta (314 aa).

[4Fe-4S] cluster contacts are provided by Cys24, Cys27, Cys52, and Cys225.

Dimer of heterotrimer of one alpha, one beta and one delta subunit. Requires [4Fe-4S] cluster as cofactor.

It catalyses the reaction oxidized 2[4Fe-4S]-[ferredoxin] + oxalate = reduced 2[4Fe-4S]-[ferredoxin] + 2 CO2. In terms of biological role, catalyzes the anaerobic oxidation of oxalate using a broad range of electron acceptors, including ferredoxin and the nickel-dependent carbon monoxide dehydrogenase. Does not require coenzyme A as cosubstrate. Enables anaerobic growth on oxalate which is used as energy source by the bacteria. This chain is Oxalate oxidoreductase subunit beta, found in Moorella thermoacetica (strain ATCC 39073 / JCM 9320).